The primary structure comprises 1006 residues: DNA polymerase (1006 aa).

Belongs to the DNA polymerase type-B family. Interacts with OPG148. Component of the Uracil-DNA glycosylase(UDG)-OPG148-polymerase complex; OPG148 and OPG116/UDG form a heterodimeric processivity factor that associates with OPG071 to form the processive polymerase holoenzyme.

It carries out the reaction DNA(n) + a 2'-deoxyribonucleoside 5'-triphosphate = DNA(n+1) + diphosphate. Catalyzes DNA synthesis. Acquires processivity by associating with a heterodimeric processivity factor comprised of the viral OPG148 and OPG116 proteins, thereby forming the DNA polymerase holoenzyme. Displays 3'- to 5' exonuclease activity. Might participate in viral DNA recombination. Does not perform OPG116/D4synthesis across an abasic site. The chain is DNA polymerase (OPG071) from Homo sapiens (Human).